An 837-amino-acid chain; its full sequence is ABC transporter A family member 8 (837 aa).

7 helical membrane-spanning segments follow: residues 29–49 (YFST…FYII), 244–264 (VVSL…FIFL), 303–323 (LIIC…FFLG), 326–346 (FLVL…MAFF), 356–376 (VAIG…LTFN), 393–413 (GAAF…SKVL), and 455–475 (LAYM…IEYA). Residues 516–750 (IRGLSKTFNK…YGEGYSVQVI (235 aa)) enclose the ABC transporter domain. 553–560 (GSNGAGKS) is a binding site for ATP.

It belongs to the ABC transporter superfamily. ABCA family.

The protein resides in the membrane. The protein is ABC transporter A family member 8 (abcA8) of Dictyostelium discoideum (Social amoeba).